The following is a 1281-amino-acid chain: Dynactin subunit 1 (1281 aa).

A disordered region spans residues 1-26 (MAQSRRHMSSRTPSGSRMSTEASARP). Positions 10–22 (SRTPSGSRMSTEA) are enriched in polar residues. The region spanning 48–90 (GATLFATGKWVGVILDEAKGKNDGTVQGRKYFTCDEGHGIFVR) is the CAP-Gly domain. The interval 100–221 (GADTTSPETP…SPSKEEEGLR (122 aa)) is disordered. The segment covering 102–114 (DTTSPETPDSSAS) has biased composition (polar residues). A phosphothreonine mark is found at Thr108, Thr145, Thr146, and Thr147. Basic residues predominate over residues 129–152 (SKLRGLKPKKAPTARKTTTRRPKP). Low complexity predominate over residues 161–205 (AGPSSSLGPSGSASAGELSSSEPSTPAQTPLAAPIIPTPALTSPG). Phosphoserine; by PLK1 is present on Ser179. Ser212 is modified (phosphoserine; by CDK1). Coiled coils occupy residues 214-547 (SKEE…RQQQ), 943-1049 (LKLE…EGLR), and 1185-1214 (SAQL…KETV). The interval 911–1281 (EYDAERPPSK…LHQLHSRLIS (371 aa)) is interaction with HPS6.

The protein belongs to the dynactin 150 kDa subunit family. As to quaternary structure, monomer and homodimer. Subunit of dynactin, a multiprotein complex part of a tripartite complex with dynein and a adapter, such as BICDL1, BICD2 or HOOK3. The dynactin complex is built around ACTR1A/ACTB filament and consists of an actin-related filament composed of a shoulder domain, a pointed end and a barbed end. Its length is defined by its flexible shoulder domain. The soulder is composed of 2 DCTN1 subunits, 4 DCTN2 and 2 DCTN3. DCTN1/p150(glued) binds directly to microtubules and to cytoplasmic dynein. The 4 DCNT2 (via N-terminus) bind the ACTR1A filament and act as molecular rulers to determine the length. The pointed end is important for binding dynein-dynactin cargo adapters. Consists of 4 subunits: ACTR10, DCNT4, DCTN5 and DCTN6. The barbed end is composed of a CAPZA1:CAPZB heterodimers, which binds ACTR1A/ACTB filament and dynactin and stabilizes dynactin. Interacts with the C-terminus of MAPRE1, MAPRE2 and MAPRE3. Interacts with FBXL5. Interacts with ECPAS. Interacts with CLIP1. Interacts with CLN3 and DYNAP. Interacts with MISP; this interaction regulates its distribution at the cell cortex. Interacts with CEP131. Interacts with CEP126. Interacts with dynein intermediate chain and dynein heavy chain. Interacts with PLK1 (via POLO-box domain). Interacts with TBCB and PARD6A. Binds preferentially to tyrosinated microtubules than to detyrosinated microtubules. Interacts with KIF3A. Interacts with HPS6. Interacts with SNX6. Interacts with BICD2. Interacts with DST (isoform 1). Identified in a complex with MREG and RILP. Interacts with BCCIP. Interacts with DCDC1. Interacts with AKNA. Interacts with DYNC1I2. Interacts with RUFY3 and RUFY4. In terms of processing, ubiquitinated by a SCF complex containing FBXL5, leading to its degradation by the proteasome. Post-translationally, phosphorylation by SLK at Thr-145, Thr-146 and Thr-147 targets DCTN1 to the centrosome. It is uncertain if SLK phosphorylates all three threonines or one or two of them. PLK1-mediated phosphorylation at Ser-179 is essential for its localization in the nuclear envelope and promotes its dissociation from microtubules during early mitosis and positively regulates nuclear envelope breakdown during prophase.

The protein localises to the cytoplasm. It is found in the cytoskeleton. Its subcellular location is the microtubule organizing center. It localises to the centrosome. The protein resides in the centriole. The protein localises to the spindle. It is found in the nucleus envelope. Its subcellular location is the cell cortex. Part of the dynactin complex that activates the molecular motor dynein for ultra-processive transport along microtubules. Plays a key role in dynein-mediated retrograde transport of vesicles and organelles along microtubules by recruiting and tethering dynein to microtubules. Binds to both dynein and microtubules providing a link between specific cargos, microtubules and dynein. Essential for targeting dynein to microtubule plus ends, recruiting dynein to membranous cargos and enhancing dynein processivity (the ability to move along a microtubule for a long distance without falling off the track). Can also act as a brake to slow the dynein motor during motility along the microtubule. Can regulate microtubule stability by promoting microtubule formation, nucleation and polymerization and by inhibiting microtubule catastrophe in neurons. Inhibits microtubule catastrophe by binding both to microtubules and to tubulin, leading to enhanced microtubule stability along the axon. Plays a role in metaphase spindle orientation. Plays a role in centriole cohesion and subdistal appendage organization and function. Its recruitment to the centriole in a KIF3A-dependent manner is essential for the maintenance of centriole cohesion and the formation of subdistal appendage. Also required for microtubule anchoring at the mother centriole. Plays a role in primary cilia formation. In Mus musculus (Mouse), this protein is Dynactin subunit 1 (Dctn1).